Reading from the N-terminus, the 188-residue chain is Elongation factor P (188 aa).

Lysine 34 is subject to N6-(3,6-diaminohexanoyl)-5-hydroxylysine.

This sequence belongs to the elongation factor P family. May be beta-lysylated on the epsilon-amino group of Lys-34 by the combined action of EpmA and EpmB, and then hydroxylated on the C5 position of the same residue by EpmC (if this protein is present). Lysylation is critical for the stimulatory effect of EF-P on peptide-bond formation. The lysylation moiety may extend toward the peptidyltransferase center and stabilize the terminal 3-CCA end of the tRNA. Hydroxylation of the C5 position on Lys-34 may allow additional potential stabilizing hydrogen-bond interactions with the P-tRNA.

It localises to the cytoplasm. The protein operates within protein biosynthesis; polypeptide chain elongation. Its function is as follows. Involved in peptide bond synthesis. Alleviates ribosome stalling that occurs when 3 or more consecutive Pro residues or the sequence PPG is present in a protein, possibly by augmenting the peptidyl transferase activity of the ribosome. Modification of Lys-34 is required for alleviation. This chain is Elongation factor P, found in Cronobacter sakazakii (strain ATCC BAA-894) (Enterobacter sakazakii).